A 445-amino-acid chain; its full sequence is MTRDKKHYICSNCANISHKWSGQCFDCGVWGSIVEEIISTNKSIITGSKQTFDKLSCDVSEPLRISTPISELNRVLGGGLVLGSAILIGGEPGIGKSTLLLQLTASNFESKMRCLYITGEESLDQIKLRAIRLNITNYNTAILAATNLEDIIASIDDNNNNIDLVVIDSIQTITTKELSSPPGTVSQIRTCANELVNYSKQNNIIILLSCHVTKDGQIAGPKILEHLVDTVLYFEGDHNNHFRILRSYKNRFGSIGEIGVFEMSSSGILEVTNHSELFLMKREHNVVGTSIFAGVEGSRPLLMEVQALIVPSNMLTPKRSAVGWDANRLSMILAVLSSRIGLNLANYEIYLSIAGGLKITDPASDLAVAASLISAATSIPLPEHSVFFGEISLSGEIRKTAKAETRIKEAVKLGFNKVICSKLENLTYDFICSCTHLQDLKEIIK.

A C4-type zinc finger spans residues 10–27; the sequence is CSNCANISHKWSGQCFDC. 90–97 is an ATP binding site; that stretch reads GEPGIGKS. The short motif at 249–253 is the RadA KNRFG motif element; that stretch reads KNRFG. A lon-protease-like region spans residues 348-445; the sequence is EIYLSIAGGL…HLQDLKEIIK (98 aa).

Belongs to the RecA family. RadA subfamily.

Its function is as follows. DNA-dependent ATPase involved in processing of recombination intermediates, plays a role in repairing DNA breaks. Stimulates the branch migration of RecA-mediated strand transfer reactions, allowing the 3' invading strand to extend heteroduplex DNA faster. Binds ssDNA in the presence of ADP but not other nucleotides, has ATPase activity that is stimulated by ssDNA and various branched DNA structures, but inhibited by SSB. Does not have RecA's homology-searching function. This chain is DNA repair protein RadA, found in Rickettsia typhi (strain ATCC VR-144 / Wilmington).